Consider the following 250-residue polypeptide: Cell division protein ZapD (250 aa).

This sequence belongs to the ZapD family. In terms of assembly, interacts with FtsZ.

The protein resides in the cytoplasm. Functionally, cell division factor that enhances FtsZ-ring assembly. Directly interacts with FtsZ and promotes bundling of FtsZ protofilaments, with a reduction in FtsZ GTPase activity. The polypeptide is Cell division protein ZapD (Bordetella petrii (strain ATCC BAA-461 / DSM 12804 / CCUG 43448)).